The sequence spans 916 residues: DNA mismatch repair protein MutS (916 aa).

The interval 1 to 47 (MSEALSVPAAEGENTVTASESPDLAATSARAEKVGKQEKPEKAEKQS) is disordered. Basic and acidic residues predominate over residues 30 to 45 (RAEKVGKQEKPEKAEK). Residue 656–663 (GPNMGGKS) coordinates ATP. Polar residues predominate over residues 843 to 861 (ADATPTPQMDLFSAQSSPS). Residues 843–880 (ADATPTPQMDLFSAQSSPSADDEDDKSAGQSAVPPAQA) are disordered.

The protein belongs to the DNA mismatch repair MutS family.

Its function is as follows. This protein is involved in the repair of mismatches in DNA. It is possible that it carries out the mismatch recognition step. This protein has a weak ATPase activity. This is DNA mismatch repair protein MutS from Cupriavidus metallidurans (strain ATCC 43123 / DSM 2839 / NBRC 102507 / CH34) (Ralstonia metallidurans).